The chain runs to 330 residues: Aquaporin-3 (330 aa).

Residues 1 to 40 (MSATPIIHLRDVKKRTGVLNAWERVRNKPQVHWAMECFAE) are Cytoplasmic-facing. Residues 41-61 (ALGVFFYVYFGLGSTAAWVIG) traverse the membrane as a helical segment. The Extracellular segment spans residues 62–71 (NILKQSGLSS). Residues 72 to 92 (VFQIGFAYAFGILFAIGVCAA) traverse the membrane as a helical segment. Over 93 to 124 (TSGGHFNPCVTIAFTIFRGFPPLKAVRYIVAQ) the chain is Cytoplasmic. An NPA 1 motif is present at residues 99 to 101 (NPC). Residues 125–145 (ILGAYIASALVYNQWKVLIVE) traverse the membrane as a helical segment. Residues 146 to 157 (SELLLKQAGVYE) lie on the Extracellular side of the membrane. Residues 158 to 178 (TTMFTPNGPAGIFALYLLPGA) traverse the membrane as a helical segment. The Cytoplasmic portion of the chain corresponds to 179–183 (QTLPR). A helical membrane pass occupies residues 184 to 204 (AFLNEFVNCFVLALVIWAALD). At 205-207 (PTS) the chain is on the extracellular side. The chain crosses the membrane as a helical span at residues 208–228 (FMIPPVMAPFIIAAAYAGSIW). The Cytoplasmic portion of the chain corresponds to 229 to 264 (GYAVPAISLNSARDIGCRLFALTIWGKSAAGGSYSA). The short motif at 238–240 (NSA) is the NPA 2 element. Residues 265-285 (IAALVNIPATLLAAVVYELFL) traverse the membrane as a helical segment. The Extracellular portion of the chain corresponds to 286-330 (VDSDRVVAGSHLEFMNVAANHRRHRQQAEDDNLVEADDSSQEKPV). The segment at 308–330 (RHRQQAEDDNLVEADDSSQEKPV) is disordered. Residues 314–324 (EDDNLVEADDS) are compositionally biased toward acidic residues.

The protein belongs to the MIP/aquaporin (TC 1.A.8) family.

The protein resides in the cell membrane. The enzyme catalyses H2O(in) = H2O(out). It carries out the reaction CO2(out) = CO2(in). In terms of biological role, water channel required to facilitate the transport of water across membranes. Also mediates the transport of carbon dioxide across the membrane. This chain is Aquaporin-3, found in Laccaria bicolor (Bicoloured deceiver).